We begin with the raw amino-acid sequence, 641 residues long: Kelch-like protein 22 (641 aa).

A disordered region spans residues 1–25 (MAEDLETMKPSQAPQQPSLPQGSSK). Residues 10 to 24 (PSQAPQQPSLPQGSS) are compositionally biased toward low complexity. In terms of domain architecture, BTB spans 50–117 (FDVVLKVEGK…IYTSDLALSV (68 aa)). Kelch repeat units follow at residues 299–349 (CVVG…VLNN), 350–399 (FVYL…VLGD), 400–446 (FLYA…ALDG), 448–493 (MYVA…ALQE), 494–544 (KIYL…VLAK), and 545–593 (KIFV…VLTL).

Component of the BCR(KLHL22) E3 ubiquitin ligase complex, at least composed of cul3, klhl22 and rbx1.

Its subcellular location is the cytoplasm. It localises to the cytosol. The protein localises to the cytoskeleton. It is found in the microtubule organizing center. The protein resides in the centrosome. Its subcellular location is the spindle. It localises to the nucleus. The protein localises to the lysosome. The protein operates within protein modification; protein ubiquitination. Functionally, substrate-specific adapter of a BCR (BTB-CUL3-RBX1) E3 ubiquitin ligase complex. The BCR(KLHL22) ubiquitin ligase complex could mediate the monoubiquitination of PLK1 and regulate its activity in spindle assembly checkpoint (SAC) and chromosome segregation. The BCR(KLHL22) ubiquitin ligase complex may also be responsible for the ubiquitin-dependent proteasomal degradation of DEPDC5 and the activation of the TORC1 pathway. This chain is Kelch-like protein 22 (klhl22), found in Xenopus tropicalis (Western clawed frog).